The chain runs to 163 residues: NADH-quinone oxidoreductase subunit I (163 aa).

2 4Fe-4S ferredoxin-type domains span residues 53–83 and 94–123; these read LRRY…IEAG and VRYD…EGPN. Residues C63, C66, C69, C73, C103, C106, C109, and C113 each contribute to the [4Fe-4S] cluster site.

Belongs to the complex I 23 kDa subunit family. In terms of assembly, NDH-1 is composed of 14 different subunits. Subunits NuoA, H, J, K, L, M, N constitute the membrane sector of the complex. [4Fe-4S] cluster is required as a cofactor.

The protein localises to the cell inner membrane. It carries out the reaction a quinone + NADH + 5 H(+)(in) = a quinol + NAD(+) + 4 H(+)(out). Its function is as follows. NDH-1 shuttles electrons from NADH, via FMN and iron-sulfur (Fe-S) centers, to quinones in the respiratory chain. The immediate electron acceptor for the enzyme in this species is believed to be ubiquinone. Couples the redox reaction to proton translocation (for every two electrons transferred, four hydrogen ions are translocated across the cytoplasmic membrane), and thus conserves the redox energy in a proton gradient. The protein is NADH-quinone oxidoreductase subunit I of Rhizobium johnstonii (strain DSM 114642 / LMG 32736 / 3841) (Rhizobium leguminosarum bv. viciae).